We begin with the raw amino-acid sequence, 492 residues long: Trehalose-6-phosphate synthase (492 aa).

Residue Arg-25 coordinates D-glucose 6-phosphate. 45 to 46 (GG) lines the UDP-alpha-D-glucose pocket. Positions 101 and 155 each coordinate D-glucose 6-phosphate. Residues Arg-297 and Lys-302 each coordinate UDP-alpha-D-glucose. A D-glucose 6-phosphate-binding site is contributed by Arg-335. 400–404 (LVAKE) is a UDP-alpha-D-glucose binding site.

The protein belongs to the glycosyltransferase 20 family. As to quaternary structure, homotetramer.

It carries out the reaction ADP-alpha-D-glucose + D-glucose 6-phosphate = alpha,alpha-trehalose 6-phosphate + ADP + H(+). The enzyme catalyses CDP-alpha-D-glucose + D-glucose 6-phosphate = alpha,alpha-trehalose 6-phosphate + CDP + H(+). It catalyses the reaction GDP-alpha-D-glucose + D-glucose 6-phosphate = alpha,alpha-trehalose 6-phosphate + GDP + H(+). The catalysed reaction is TDP-alpha-D-glucose + D-glucose 6-phosphate = 5-methyl-UDP + alpha,alpha-trehalose 6-phosphate + H(+). It carries out the reaction D-glucose 6-phosphate + UDP-alpha-D-glucose = alpha,alpha-trehalose 6-phosphate + UDP + H(+). Its pathway is glycan biosynthesis; trehalose biosynthesis. Its function is as follows. Probably involved in the osmoprotection via the biosynthesis of trehalose and in the production of glycogen and alpha-glucan via the TreS-Pep2 branch involved in the biosynthesis of maltose-1-phosphate (M1P). Catalyzes the transfer of glucose from UDP-glucose (UDP-Glc) to D-glucose 6-phosphate (Glc-6-P) to form trehalose-6-phosphate. Probably also able to use ADP-Glc, CDP-Glc, GDP-Glc and TDP-Glc as glucosyl donors. This is Trehalose-6-phosphate synthase from Mycobacterium avium (strain 104).